The chain runs to 397 residues: Succinate--CoA ligase [ADP-forming] subunit beta (397 aa).

An ATP-grasp domain is found at 9 to 254 (KALLREFGVP…ESEEDAKEIE (246 aa)). Residues K46, 53 to 55 (GRG), E109, S112, and E117 each bind ATP. N209 and D223 together coordinate Mg(2+). Substrate is bound by residues N274 and 331 to 333 (GIM).

The protein belongs to the succinate/malate CoA ligase beta subunit family. Heterotetramer of two alpha and two beta subunits. Mg(2+) is required as a cofactor.

It catalyses the reaction succinate + ATP + CoA = succinyl-CoA + ADP + phosphate. It carries out the reaction GTP + succinate + CoA = succinyl-CoA + GDP + phosphate. The protein operates within carbohydrate metabolism; tricarboxylic acid cycle; succinate from succinyl-CoA (ligase route): step 1/1. Functionally, succinyl-CoA synthetase functions in the citric acid cycle (TCA), coupling the hydrolysis of succinyl-CoA to the synthesis of either ATP or GTP and thus represents the only step of substrate-level phosphorylation in the TCA. The beta subunit provides nucleotide specificity of the enzyme and binds the substrate succinate, while the binding sites for coenzyme A and phosphate are found in the alpha subunit. The protein is Succinate--CoA ligase [ADP-forming] subunit beta of Nitrobacter hamburgensis (strain DSM 10229 / NCIMB 13809 / X14).